The following is a 706-amino-acid chain: MEKTFNLTRRDDGIAILTMDVPGETMNTLKAQFGPEISEILAEIKSDPHIRGLVLISGKKDSFVAGADISMLDACKTAGDAKALSQQGHVVFNELEALKIPVVAAIHGACLGGGLELALACHQRVCSDDGKTMLGVPEVQLGLLPGGGGTQRLPRLVGITTALDMMLTGKQIRPKQALKMGLVNDVVPQTILLQTAVEMALAGKRAPKPIKKSLVNQVLEGTSFGRNIIFDQATKQVEKKTQGNYPAPAKIIDCVRQGIAKGMQKGLEVEASHFAELVVSKESEALRSIFFATTEMKKETGAEGATPRKVKKAVILGGGLMGGGIASVTTTKAKIPVRVKDISEKGLSNALAYAYKLLDKGVKRRHMTPAVRDNLMALMTTTTEYKGVKDADIVVEAVFEDLALKHQMVKDIERECGEHTIFASNTSSLPISQIAEAATRPENVIGLHYFSPVEKMPLVEVIAHAKTSPETIATTVAFARKQGKTPIVVQDGAGFYVNRILALYMNEAAQLLLEGQSVEHLDKALVKFGFPVGPITLLDEVGIDVGAKISPILDKELGERFKAPAAFDKLLGDDRKGRKNGKGFYQYGASSKKTKAVDETVYGVLGIKPSTNKDAKALAERCVVQMLNEAVRCLDEGIIASPRDGDIGAIFGIGFPPFLGGPFHYIDTLGAANLVKILEGYQSQFGNRFEPCERLKTMARENVSFF.

An enoyl-CoA hydratase region spans residues 1–188 (MEKTFNLTRR…KMGLVNDVVP (188 aa)). A 3-hydroxyacyl-CoA dehydrogenase region spans residues 308-706 (RKVKKAVILG…TMARENVSFF (399 aa)).

It in the N-terminal section; belongs to the enoyl-CoA hydratase/isomerase family. The protein in the central section; belongs to the 3-hydroxyacyl-CoA dehydrogenase family. Heterotetramer of two alpha chains (FadJ) and two beta chains (FadI).

It is found in the cytoplasm. The enzyme catalyses a (3S)-3-hydroxyacyl-CoA = a (2E)-enoyl-CoA + H2O. It carries out the reaction a 4-saturated-(3S)-3-hydroxyacyl-CoA = a (3E)-enoyl-CoA + H2O. It catalyses the reaction a (3S)-3-hydroxyacyl-CoA + NAD(+) = a 3-oxoacyl-CoA + NADH + H(+). The catalysed reaction is (3S)-3-hydroxybutanoyl-CoA = (3R)-3-hydroxybutanoyl-CoA. It functions in the pathway lipid metabolism; fatty acid beta-oxidation. Functionally, catalyzes the formation of a hydroxyacyl-CoA by addition of water on enoyl-CoA. Also exhibits 3-hydroxyacyl-CoA epimerase and 3-hydroxyacyl-CoA dehydrogenase activities. The sequence is that of Fatty acid oxidation complex subunit alpha from Shewanella putrefaciens (strain CN-32 / ATCC BAA-453).